The sequence spans 210 residues: 3-hexulose-6-phosphate synthase (210 aa).

This sequence belongs to the HPS/KGPDC family. HPS subfamily.

It catalyses the reaction D-ribulose 5-phosphate + formaldehyde = D-arabino-hex-3-ulose 6-phosphate. It participates in one-carbon metabolism; formaldehyde assimilation via RuMP pathway; D-fructose 6-phosphate from D-ribulose 5-phosphate and formaldehyde: step 1/2. Its function is as follows. Catalyzes the condensation of ribulose 5-phosphate with formaldehyde to form 3-hexulose 6-phosphate. This chain is 3-hexulose-6-phosphate synthase, found in Staphylococcus epidermidis (strain ATCC 35984 / DSM 28319 / BCRC 17069 / CCUG 31568 / BM 3577 / RP62A).